The chain runs to 160 residues: Troponin C, isoform 2 (160 aa).

4 consecutive EF-hand domains span residues 15–50 (DQIE…MGQA), 51–86 (FEER…FVVN), 92–127 (GLEE…LDDN), and 128–160 (VSEE…MSGE). Positions 64, 66, 68, 70, and 75 each coordinate Ca(2+). Asp141, Asp143, Ser145, Thr147, and Glu152 together coordinate Ca(2+).

The protein belongs to the troponin C family. In terms of tissue distribution, pharyngeal muscle.

The chain is Troponin C, isoform 2 (tnc-2) from Caenorhabditis elegans.